Consider the following 177-residue polypeptide: Coatomer subunit zeta-1 (177 aa).

The protein belongs to the adaptor complexes small subunit family. Oligomeric complex that consists of at least the alpha, beta, beta', gamma, delta, epsilon and zeta subunits.

The protein resides in the cytoplasm. It localises to the golgi apparatus membrane. Its subcellular location is the cytoplasmic vesicle. The protein localises to the COPI-coated vesicle membrane. The coatomer is a cytosolic protein complex that binds to dilysine motifs and reversibly associates with Golgi non-clathrin-coated vesicles, which further mediate biosynthetic protein transport from the ER, via the Golgi up to the trans Golgi network. Coatomer complex is required for budding from Golgi membranes, and is essential for the retrograde Golgi-to-ER transport of dilysine-tagged proteins. The zeta subunit may be involved in regulating the coat assembly and, hence, the rate of biosynthetic protein transport due to its association-dissociation properties with the coatomer complex. The polypeptide is Coatomer subunit zeta-1 (COPZ1) (Oryza sativa subsp. japonica (Rice)).